We begin with the raw amino-acid sequence, 316 residues long: Probable 5-dehydro-4-deoxyglucarate dehydratase 1 (316 aa).

This sequence belongs to the DapA family.

The enzyme catalyses 5-dehydro-4-deoxy-D-glucarate + H(+) = 2,5-dioxopentanoate + CO2 + H2O. It functions in the pathway carbohydrate acid metabolism; D-glucarate degradation; 2,5-dioxopentanoate from D-glucarate: step 2/2. This Streptomyces coelicolor (strain ATCC BAA-471 / A3(2) / M145) protein is Probable 5-dehydro-4-deoxyglucarate dehydratase 1.